A 389-amino-acid polypeptide reads, in one-letter code: Endo-chitosanase C (389 aa).

An N-terminal signal peptide occupies residues 1-22 (MPIKSFASRLALSLAICGTAMG). An R3-1 repeat occupies 280-313 (CSWPGHCAGFKNKGATCSSNDDCSDDLACQNGKC). An R3-2 repeat occupies 320–350 (ETCSWEGHCKGATCSSNDDCSDELACISGIC). An R3-3 repeat occupies 357 to 387 (ETCEWEGHCEGASCSSHDDCDGNLACKNGKC).

The protein belongs to the glycosyl hydrolase 75 family.

Its subcellular location is the secreted. It catalyses the reaction Endohydrolysis of beta-(1-&gt;4)-linkages between D-glucosamine residues in a partly acetylated chitosan.. Functionally, chitosanase catalyzing the endo-type cleavage of chitosan, the deacylated form of chitin. Chitosanase may be crucial in the degradation of the deacetylated portion of chitin in the fungal cell wall. Chitoolisaccharides produced by the hydrolysis of partially N-acetylated chitosan are known to have many biological activities, including antibacterial activity, immune-enhancing effects, and elicitor activity. The chain is Endo-chitosanase C (csnC) from Aspergillus oryzae (strain ATCC 42149 / RIB 40) (Yellow koji mold).